Here is a 79-residue protein sequence, read N- to C-terminus: RNA-binding protein KhpA (79 aa).

Positions 32 to 79 (TVVIELRVDPAELGKVIGKQGRIARALRTILTAIGRKIGKRVVLEILE) constitute a KH domain.

Belongs to the KhpA RNA-binding protein family.

The protein localises to the cytoplasm. In terms of biological role, a probable RNA-binding protein. The sequence is that of RNA-binding protein KhpA from Aquifex aeolicus (strain VF5).